A 363-amino-acid chain; its full sequence is Holliday junction branch migration complex subunit RuvB (363 aa).

The interval 1–23 (MHKDEDQRLLGPAPLPNDPDRSL) is disordered. The large ATPase domain (RuvB-L) stretch occupies residues 1 to 184 (MHKDEDQRLL…FGIPIRLNFY (184 aa)). ATP is bound by residues leucine 23, arginine 24, glycine 65, lysine 68, threonine 69, threonine 70, 131–133 (EDY), arginine 174, tyrosine 184, and arginine 221. A Mg(2+)-binding site is contributed by threonine 69. The small ATPAse domain (RuvB-S) stretch occupies residues 185–255 (TIEELEYIVQ…IADEALSRLE (71 aa)). A head domain (RuvB-H) region spans residues 258–363 (HLGLDPLDRR…QTTLWDGEDD (106 aa)). Arginine 294, arginine 313, and arginine 318 together coordinate DNA.

It belongs to the RuvB family. Homohexamer. Forms an RuvA(8)-RuvB(12)-Holliday junction (HJ) complex. HJ DNA is sandwiched between 2 RuvA tetramers; dsDNA enters through RuvA and exits via RuvB. An RuvB hexamer assembles on each DNA strand where it exits the tetramer. Each RuvB hexamer is contacted by two RuvA subunits (via domain III) on 2 adjacent RuvB subunits; this complex drives branch migration. In the full resolvosome a probable DNA-RuvA(4)-RuvB(12)-RuvC(2) complex forms which resolves the HJ.

The protein resides in the cytoplasm. It catalyses the reaction ATP + H2O = ADP + phosphate + H(+). In terms of biological role, the RuvA-RuvB-RuvC complex processes Holliday junction (HJ) DNA during genetic recombination and DNA repair, while the RuvA-RuvB complex plays an important role in the rescue of blocked DNA replication forks via replication fork reversal (RFR). RuvA specifically binds to HJ cruciform DNA, conferring on it an open structure. The RuvB hexamer acts as an ATP-dependent pump, pulling dsDNA into and through the RuvAB complex. RuvB forms 2 homohexamers on either side of HJ DNA bound by 1 or 2 RuvA tetramers; 4 subunits per hexamer contact DNA at a time. Coordinated motions by a converter formed by DNA-disengaged RuvB subunits stimulates ATP hydrolysis and nucleotide exchange. Immobilization of the converter enables RuvB to convert the ATP-contained energy into a lever motion, pulling 2 nucleotides of DNA out of the RuvA tetramer per ATP hydrolyzed, thus driving DNA branch migration. The RuvB motors rotate together with the DNA substrate, which together with the progressing nucleotide cycle form the mechanistic basis for DNA recombination by continuous HJ branch migration. Branch migration allows RuvC to scan DNA until it finds its consensus sequence, where it cleaves and resolves cruciform DNA. In Bartonella tribocorum (strain CIP 105476 / IBS 506), this protein is Holliday junction branch migration complex subunit RuvB.